The sequence spans 151 residues: Transcription antitermination protein NusB (151 aa).

The protein belongs to the NusB family.

Its function is as follows. Involved in transcription antitermination. Required for transcription of ribosomal RNA (rRNA) genes. Binds specifically to the boxA antiterminator sequence of the ribosomal RNA (rrn) operons. In Thermus thermophilus (strain ATCC BAA-163 / DSM 7039 / HB27), this protein is Transcription antitermination protein NusB.